Consider the following 351-residue polypeptide: SLAM family member 6 (351 aa).

The N-terminal stretch at 1–30 is a signal peptide; that stretch reads MAVSRAPAPDSACQRMVWLFPLVFCLGSGS. Over 31 to 239 the chain is Extracellular; that stretch reads EVSQSSSDPQ…KGVLTNPPWN (209 aa). Residues 36–130 enclose the Ig-like V-type domain; the sequence is SSDPQLMNGV…YTAQITTKDS (95 aa). N-linked (GlcNAc...) asparagine glycosylation is found at Asn82, Asn101, Asn112, Asn152, Asn159, Asn172, Asn186, Asn193, and Asn218. An Ig-like C2-type domain is found at 147-210; sequence NLETTNYTLL…RNSGDQTYVC (64 aa). Cystine bridges form between Cys162–Cys229 and Cys168–Cys210. A helical membrane pass occupies residues 240–262; that stretch reads AVWFMTTISIISAVILIFVCWSI. Residues 263-351 lie on the Cytoplasmic side of the membrane; that stretch reads HVWKRRGSLP…KVNTLINYNS (89 aa). The interval 272 to 295 is disordered; it reads PLTSQHPESSQSTDGPGSPGNTVY. Short sequence motifs (ITSM) lie at residues 293–298 and 317–322; these read TVYAQV and TIYSIV. Phosphotyrosine is present on Tyr319.

As to quaternary structure, homodimer. Interacts with PTN6 and, upon phosphorylation, with PTN11 and SH2D1A/SAP. In terms of processing, phosphorylated. Expressed on hematopoietic cells. Isoform 3 is expressed in thymocytes and B lymphocytes of C57Bl/6 strain.

It localises to the cell membrane. Its function is as follows. Self-ligand receptor of the signaling lymphocytic activation molecule (SLAM) family. SLAM receptors triggered by homo- or heterotypic cell-cell interactions are modulating the activation and differentiation of a wide variety of immune cells and thus are involved in the regulation and interconnection of both innate and adaptive immune response. Activities are controlled by presence or absence of small cytoplasmic adapter proteins, SH2D1A/SAP and/or SH2D1B/EAT-2. Triggers cytolytic activity only in natural killer cells (NK) expressing high surface densities of natural cytotoxicity receptors. Positive signaling in NK cells implicates phosphorylation of VAV1. NK cell activation seems to depend on SH2D1B and not on SH2D1A. In conjunction with SLAMF1 controls the transition between positive selection and the subsequent expansion and differentiation of the thymocytic natural killer T (NKT) cell lineage. Promotes T cell differentiation into a helper T-cell Th17 phenotype leading to increased IL-17 secretion; the costimulatory activity requires SH2D1A. Promotes recruitment of RORC to the IL-17 promoter. In conjunction with SLAMF1 and CD84/SLAMF5 may be a negative regulator of the humoral immune response. In the absence of SH2D1A/SAP can transmit negative signals to CD4(+) T-cells and NKT cells. Negatively regulates germinal center formation by inhibiting T-cell:B-cell adhesion; the function probably implicates increased association with PTPN6/SHP-1 via ITSMs in absence of SH2D1A/SAP. However, reported to mediated T-cell adhesion, to participate in stable T-cell:B-cell interactions and to be involved in maintaining B-cell tolerance in germinal centers and in preventing autoimmunity. Involved in regulation of autoimmunity. Isoform 3 may be suppressor of pathogenic T-cell proliferation. This chain is SLAM family member 6 (Slamf6), found in Mus musculus (Mouse).